The primary structure comprises 148 residues: WGDSSSSASACWSCSSPLSGTEAGVCCPLGWSGYDQNCYKAFEELMNWADAEKFCTQQHKGSHLVSLHNIAEADFVVKKIVSVLKDGVIWMGLNDVWNECNWGWTDGAQLDYKAWNVESNCFIFKTAENHWSRTDCSGTHSFVCKSPA.

The first 23 residues, 1–23 (WGDSSSSASACWSCSSPLSGTEA), serve as a signal peptide directing secretion. 3 disulfide bridges follow: Cys-27–Cys-38, Cys-55–Cys-144, and Cys-121–Cys-136. In terms of domain architecture, C-type lectin spans 34–145 (YDQNCYKAFE…CSGTHSFVCK (112 aa)).

Belongs to the snaclec family. Heterodimer; disulfide-linked. As to expression, expressed by the venom gland.

The protein resides in the secreted. In terms of biological role, interferes with one step of hemostasis (modulation of platelet aggregation, or coagulation cascade, for example). The sequence is that of Snaclec 3 from Echis carinatus sochureki (Saw-scaled viper).